Consider the following 104-residue polypeptide: Large ribosomal subunit protein uL23 (104 aa).

Belongs to the universal ribosomal protein uL23 family. As to quaternary structure, part of the 50S ribosomal subunit. Contacts protein L29, and trigger factor when it is bound to the ribosome.

Functionally, one of the early assembly proteins it binds 23S rRNA. One of the proteins that surrounds the polypeptide exit tunnel on the outside of the ribosome. Forms the main docking site for trigger factor binding to the ribosome. The polypeptide is Large ribosomal subunit protein uL23 (Leptospira interrogans serogroup Icterohaemorrhagiae serovar copenhageni (strain Fiocruz L1-130)).